The following is a 969-amino-acid chain: Protein translocase subunit SecA (969 aa).

ATP-binding positions include Gln-99, 117–121 (GEGKT), and Asp-631.

Belongs to the SecA family. In terms of assembly, monomer and homodimer. Part of the essential Sec protein translocation apparatus which comprises SecA, SecYEG and auxiliary proteins SecDF. Other proteins may also be involved.

The protein localises to the cell inner membrane. Its subcellular location is the cytoplasm. It catalyses the reaction ATP + H2O + cellular proteinSide 1 = ADP + phosphate + cellular proteinSide 2.. Its function is as follows. Part of the Sec protein translocase complex. Interacts with the SecYEG preprotein conducting channel. Has a central role in coupling the hydrolysis of ATP to the transfer of proteins into and across the cell membrane, serving as an ATP-driven molecular motor driving the stepwise translocation of polypeptide chains across the membrane. The sequence is that of Protein translocase subunit SecA from Chlamydia abortus (strain DSM 27085 / S26/3) (Chlamydophila abortus).